The primary structure comprises 224 residues: Paired immunoglobulin-like type 2 receptor beta (224 aa).

Residues 1 to 28 (MALLISLPGGTPAMAQVLLLLSSGCLHA) form the signal peptide. Over 29 to 195 (GNSERYNRKN…NPSLMNLGAM (167 aa)) the chain is Extracellular. 3 N-linked (GlcNAc...) asparagine glycosylation sites follow: N90, N107, and N154. The chain crosses the membrane as a helical span at residues 196-216 (VTMLLAKVLVIVLVYGWMIFL). Topologically, residues 217 to 224 (RWKQRPAH) are cytoplasmic.

In terms of assembly, interacts with CD99. Probably associates with DAP12. As to expression, widely expressed with highest levels in spleen, liver and lung. Predominantly expressed by natural killer cells, macrophages, and granulocytes and dendritic cells (BM-DC).

It localises to the membrane. Functionally, paired receptors consist of highly related activating and inhibitory receptors and are widely involved in the regulation of the immune system. PILRB is thought to act as a cellular signaling activating receptor that associates with ITAM-bearing adapter molecules on the cell surface. Seems to associate with DAP12 and is a receptor for CD99. May be involved in target cell recognition by natural killer cells and in activation of dendritic cells. The sequence is that of Paired immunoglobulin-like type 2 receptor beta (Pilrb) from Mus musculus (Mouse).